We begin with the raw amino-acid sequence, 144 residues long: Large ribosomal subunit protein uL13 (144 aa).

Belongs to the universal ribosomal protein uL13 family. As to quaternary structure, part of the 50S ribosomal subunit.

Its function is as follows. This protein is one of the early assembly proteins of the 50S ribosomal subunit, although it is not seen to bind rRNA by itself. It is important during the early stages of 50S assembly. In Oleidesulfovibrio alaskensis (strain ATCC BAA-1058 / DSM 17464 / G20) (Desulfovibrio alaskensis), this protein is Large ribosomal subunit protein uL13.